The primary structure comprises 401 residues: Argininosuccinate synthase (401 aa).

ATP contacts are provided by residues 9-17 and alanine 36; that span reads AYSGGLDTS. Tyrosine 87 and serine 92 together coordinate L-citrulline. Residue glycine 117 participates in ATP binding. Threonine 119, asparagine 123, and aspartate 124 together coordinate L-aspartate. Asparagine 123 serves as a coordination point for L-citrulline. L-citrulline-binding residues include arginine 127, serine 176, serine 185, glutamate 261, and tyrosine 273.

This sequence belongs to the argininosuccinate synthase family. Type 1 subfamily. As to quaternary structure, homotetramer.

It is found in the cytoplasm. The catalysed reaction is L-citrulline + L-aspartate + ATP = 2-(N(omega)-L-arginino)succinate + AMP + diphosphate + H(+). It functions in the pathway amino-acid biosynthesis; L-arginine biosynthesis; L-arginine from L-ornithine and carbamoyl phosphate: step 2/3. This chain is Argininosuccinate synthase, found in Syntrophobacter fumaroxidans (strain DSM 10017 / MPOB).